The following is a 352-amino-acid chain: Protein-glutamate methylesterase/protein-glutamine glutaminase 2 (352 aa).

The Response regulatory domain occupies 1–116 (MVVDDSAVVR…KQFLTDSADE (116 aa)). The residue at position 50 (Asp50) is a 4-aspartylphosphate. Residues 162–352 (AQTTERIVAI…MAREIVTQLQ (191 aa)) form the CheB-type methylesterase domain. Catalysis depends on residues Ser174, His200, and Asp296.

It belongs to the CheB family. Post-translationally, phosphorylated by CheA. Phosphorylation of the N-terminal regulatory domain activates the methylesterase activity.

It localises to the cytoplasm. It catalyses the reaction [protein]-L-glutamate 5-O-methyl ester + H2O = L-glutamyl-[protein] + methanol + H(+). It carries out the reaction L-glutaminyl-[protein] + H2O = L-glutamyl-[protein] + NH4(+). Involved in chemotaxis. Part of a chemotaxis signal transduction system that modulates chemotaxis in response to various stimuli. Catalyzes the demethylation of specific methylglutamate residues introduced into the chemoreceptors (methyl-accepting chemotaxis proteins or MCP) by CheR. Also mediates the irreversible deamidation of specific glutamine residues to glutamic acid. The sequence is that of Protein-glutamate methylesterase/protein-glutamine glutaminase 2 from Xanthomonas euvesicatoria pv. vesicatoria (strain 85-10) (Xanthomonas campestris pv. vesicatoria).